A 410-amino-acid polypeptide reads, in one-letter code: DNA primase small subunit (410 aa).

Catalysis depends on residues Glu43, Asp106, and Asp108. The Zinc knuckle motif signature appears at 118–129 (CCKDATVCPKCW).

This sequence belongs to the eukaryotic-type primase small subunit family. Heterodimer of a small subunit and a large subunit.

Its function is as follows. DNA primase is the polymerase that synthesizes small RNA primers for the Okazaki fragments made during discontinuous DNA replication. The chain is DNA primase small subunit (pri-1) from Caenorhabditis elegans.